Reading from the N-terminus, the 113-residue chain is MEAKAVARYIRLSPAKAREVVGLVRGKSVDEALAILRFTPQRAAGAVAKVIKSAAANAEHNNDMDRTRLVVAKVYVDQGPSLKRFRPRAYGRANVIKHRTSHITVIVSDGKEG.

It belongs to the universal ribosomal protein uL22 family. In terms of assembly, part of the 50S ribosomal subunit.

Functionally, this protein binds specifically to 23S rRNA; its binding is stimulated by other ribosomal proteins, e.g. L4, L17, and L20. It is important during the early stages of 50S assembly. It makes multiple contacts with different domains of the 23S rRNA in the assembled 50S subunit and ribosome. In terms of biological role, the globular domain of the protein is located near the polypeptide exit tunnel on the outside of the subunit, while an extended beta-hairpin is found that lines the wall of the exit tunnel in the center of the 70S ribosome. This Desulforudis audaxviator (strain MP104C) protein is Large ribosomal subunit protein uL22.